The sequence spans 154 residues: Myoglobin (154 aa).

Positions 2–148 (GLSDAEWQLV…FRNDIAAQYK (147 aa)) constitute a Globin domain. Ser4 is subject to Phosphoserine. His65 provides a ligand contact to nitrite. His65 is a binding site for O2. Thr68 carries the phosphothreonine modification. His94 lines the heme b pocket.

Belongs to the globin family. As to quaternary structure, monomeric.

It is found in the cytoplasm. The protein resides in the sarcoplasm. It carries out the reaction Fe(III)-heme b-[protein] + nitric oxide + H2O = Fe(II)-heme b-[protein] + nitrite + 2 H(+). The enzyme catalyses H2O2 + AH2 = A + 2 H2O. Functionally, monomeric heme protein which primary function is to store oxygen and facilitate its diffusion within muscle tissues. Reversibly binds oxygen through a pentacoordinated heme iron and enables its timely and efficient release as needed during periods of heightened demand. Depending on the oxidative conditions of tissues and cells, and in addition to its ability to bind oxygen, it also has a nitrite reductase activity whereby it regulates the production of bioactive nitric oxide. Under stress conditions, like hypoxia and anoxia, it also protects cells against reactive oxygen species thanks to its pseudoperoxidase activity. This is Myoglobin (MB) from Oryctolagus cuniculus (Rabbit).